The chain runs to 284 residues: Polyamine aminopropyltransferase (284 aa).

Positions 4–238 (EVWNTERLHD…GPMALGWGSH (235 aa)) constitute a PABS domain. Glutamine 33 is a binding site for S-methyl-5'-thioadenosine. 2 residues coordinate spermidine: histidine 64 and aspartate 88. Residues glutamate 108 and 140–141 (DG) each bind S-methyl-5'-thioadenosine. Aspartate 158 functions as the Proton acceptor in the catalytic mechanism. 158 to 161 (DSTD) serves as a coordination point for spermidine. Proline 165 contributes to the S-methyl-5'-thioadenosine binding site.

It belongs to the spermidine/spermine synthase family. As to quaternary structure, homodimer or homotetramer.

Its subcellular location is the cytoplasm. It catalyses the reaction S-adenosyl 3-(methylsulfanyl)propylamine + putrescine = S-methyl-5'-thioadenosine + spermidine + H(+). It functions in the pathway amine and polyamine biosynthesis; spermidine biosynthesis; spermidine from putrescine: step 1/1. In terms of biological role, catalyzes the irreversible transfer of a propylamine group from the amino donor S-adenosylmethioninamine (decarboxy-AdoMet) to putrescine (1,4-diaminobutane) to yield spermidine. The protein is Polyamine aminopropyltransferase of Ruegeria sp. (strain TM1040) (Silicibacter sp.).